The sequence spans 307 residues: MNSTEPDSARVTRTDRLDPPEIADVLTLARAAGDADGADPFDEHTLLRLRDPHAPAHHLTVRAADGILAGYAHLDSTDPAAGTGVELAVHPTYRRQGIGRALARAVRATVTGPLRAWAHGDHPSAAALAVDLGYRRARVLWQLRRPLSAPIPQPPLPEGVTLRAFRPGTDDDAWLALNARAFADHPEQGRWTSADLRARRDEPWFDAAGFLLAVDPAGHLRGFHWTKVHERPGSPRIGEVYVLGVDPQAHGGGLGKALTAAGLAYLRDRRGLDRVMLYVDESNTAAVALYERLGFARWSAHVNYQRS.

N-acetyltransferase domains lie at 12-152 (TRTD…APIP) and 160-307 (VTLR…YQRS). E43 provides a ligand contact to 1D-myo-inositol 2-(L-cysteinylamino)-2-deoxy-alpha-D-glucopyranoside. Acetyl-CoA is bound at residue 87–89 (LAV). 1D-myo-inositol 2-(L-cysteinylamino)-2-deoxy-alpha-D-glucopyranoside-binding residues include E187, K227, and E239. Acetyl-CoA is bound by residues 243 to 245 (LGV) and 250 to 256 (HGGGLGK). Residue Y278 participates in 1D-myo-inositol 2-(L-cysteinylamino)-2-deoxy-alpha-D-glucopyranoside binding.

The protein belongs to the acetyltransferase family. MshD subfamily. As to quaternary structure, monomer.

It catalyses the reaction 1D-myo-inositol 2-(L-cysteinylamino)-2-deoxy-alpha-D-glucopyranoside + acetyl-CoA = mycothiol + CoA + H(+). In terms of biological role, catalyzes the transfer of acetyl from acetyl-CoA to desacetylmycothiol (Cys-GlcN-Ins) to form mycothiol. The polypeptide is Mycothiol acetyltransferase (Salinispora arenicola (strain CNS-205)).